The chain runs to 372 residues: Nucleosome assembly protein 1;1 (372 aa).

Positions 26 to 80 (VNALKNKLQNLAGQRSDVLENLTPNVRKRVDALRDIQSQHDELEAKFREERAILE) form a coiled coil. Ser41 is modified (phosphoserine). Residues 47-62 (LTPNVRKRVDALRDIQ) carry the Nuclear export signal motif. Residues 223 to 228 (KKKPKK) carry the Nuclear localization signal motif. A disordered region spans residues 299–372 (AMEAEDFEID…DERPPECKQQ (74 aa)). The segment covering 300-337 (MEAEDFEIDDDEEDDIDEDEDEEDEEDEEDDDDEDEEE) has biased composition (acidic residues). Basic and acidic residues predominate over residues 360 to 372 (GKQDERPPECKQQ). Cys369 carries the post-translational modification Cysteine methyl ester. Residue Cys369 is the site of S-farnesyl cysteine attachment. A propeptide spans 370-372 (KQQ) (removed in mature form).

It belongs to the nucleosome assembly protein (NAP) family. Can form homomeric and heteromeric protein complexes with NAP1;2, NAP1;3 and NAP1;4. Binds histone H2A. Interacts with PP438/PNM1. In terms of processing, prenylation of the protein is required for its function during the cell proliferation phase of leaf development. As to expression, ubiquitous.

The protein resides in the nucleus. The protein localises to the cytoplasm. Its function is as follows. May modulate chromatin structure by regulation of nucleosome assembly/disassembly. Contributes to the regulation of cell proliferation and cell expansion. May function in nucleotide excision repair (NER). Involved in somatic homologous recombination. This Arabidopsis thaliana (Mouse-ear cress) protein is Nucleosome assembly protein 1;1 (NAP1;1).